Consider the following 831-residue polypeptide: Translation initiation factor IF-2 (831 aa).

Residues Thr329–Lys499 enclose the tr-type G domain. The tract at residues Gly338–Thr345 is G1. A GTP-binding site is contributed by Gly338 to Thr345. The tract at residues Gly363–His367 is G2. The interval Asp385–Gly388 is G3. Residues Asp385–His389 and Asn439–Asp442 each bind GTP. A G4 region spans residues Asn439–Asp442. The tract at residues Ser475–Leu477 is G5.

The protein belongs to the TRAFAC class translation factor GTPase superfamily. Classic translation factor GTPase family. IF-2 subfamily.

Its subcellular location is the cytoplasm. Functionally, one of the essential components for the initiation of protein synthesis. Protects formylmethionyl-tRNA from spontaneous hydrolysis and promotes its binding to the 30S ribosomal subunits. Also involved in the hydrolysis of GTP during the formation of the 70S ribosomal complex. This Rickettsia typhi (strain ATCC VR-144 / Wilmington) protein is Translation initiation factor IF-2.